The primary structure comprises 89 residues: Sec-independent protein translocase protein TatA (89 aa).

A helical membrane pass occupies residues methionine 1 to glycine 21. The span at glutamate 47–alanine 61 shows a compositional bias: basic and acidic residues. Residues glutamate 47 to alanine 89 form a disordered region. The segment covering alanine 62–alanine 74 has biased composition (low complexity). Residues glutamate 75–alanine 89 show a composition bias toward basic and acidic residues.

Belongs to the TatA/E family. In terms of assembly, the Tat system comprises two distinct complexes: a TatABC complex, containing multiple copies of TatA, TatB and TatC subunits, and a separate TatA complex, containing only TatA subunits. Substrates initially bind to the TatABC complex, which probably triggers association of the separate TatA complex to form the active translocon.

It localises to the cell inner membrane. Its function is as follows. Part of the twin-arginine translocation (Tat) system that transports large folded proteins containing a characteristic twin-arginine motif in their signal peptide across membranes. TatA could form the protein-conducting channel of the Tat system. The polypeptide is Sec-independent protein translocase protein TatA (Shewanella pealeana (strain ATCC 700345 / ANG-SQ1)).